Reading from the N-terminus, the 598-residue chain is MAKEVIIGIDLGTTNSVVSIVDNGSPVVLENLNGKRTTPSVVSFKDGEIIVGDNAKNQIETNPDTVASIKRLMGTSKTVHVNNKDYKPEEISAMILEHLKKYAEEKIGHKVEKAVITVPAYFDNAQREATKIAGKIAGLEVLRIINEPTAAALAFGLDKVKKEQKILVFDLGGGTFDVSILELAEGTFEVLSTAGDNRLGGDDWDNEIVKWLIDLIKKDYKTDVTNNKMAMARLKAAAEKAKIDLSSSQQATIMLPFLVMQQGSEPISVEATLRRSQFEEMTSHLVERCRKPIETALADAKIKISDLDDVILVGGSTRIPAVQQLVESILNKKANRSVNPDEVVAMGAAIQGAVLAGEIDDVLLVDVTPLTLGIETAGGIATPLIPRNTRIPITKSEVFTTFEDNQSEVTIRIVQGERPLASENKLLGQFNLGGIRVAPRGVPQIEVSFKIDANGITTVLAKDKDTNKEQSITIKNSSKLSESEIEEMIKDAEKNREADAKRAEEISTIIQAENLVNSLEKEMNDGNIVIPEEEKAKIADYIKEVKELINNKDVEQLKKKIDELNAAYNMAKSAAASSNKDDSLNNNSSSNNDEETFE.

The residue at position 175 (Thr175) is a Phosphothreonine; by autocatalysis. Over residues 571–591 (AKSAAASSNKDDSLNNNSSSN) the composition is skewed to low complexity. The segment at 571-598 (AKSAAASSNKDDSLNNNSSSNNDEETFE) is disordered.

It belongs to the heat shock protein 70 family.

Acts as a chaperone. The chain is Chaperone protein DnaK from Mycoplasmopsis agalactiae (strain NCTC 10123 / CIP 59.7 / PG2) (Mycoplasma agalactiae).